Here is a 474-residue protein sequence, read N- to C-terminus: MAGKTLYGKLWDIHEVARRDDGSSLIYIDRHILHEVTSPQAFEGLRLAGRPLWRVNANIATPDHNVPTTKAERQGSLLSIADTVSRLQVQTLDENCDDFGIFEFKMNDVRQGIVHVIGPEQGATLPGMTVVCGDSHTSTHGAFGALAHGIGTSEVEHVLATQCLVTQKMKNMQVRVEGTLPWGVTAKDIVLALIGKIGTAGGNGYAVEFSGSTIRALSMEGRMTICNMAIEAGARVGMVAVDEKTIQYVHGRPFAPKGSDWDAAVAFWRGLVSDPDAHFDRVVELSAEEIKPQVTWGTSPEMVSAVDQSVPDPERETDPVKKESLIRALKYMGLQPNDPITSIKLDRVFIGSCTNSRIEDLRAAAEVVKGRKVASTVKQAMVVPGSGLVKAQAEVEGLDKIFIEAGFEWREPGCSMCLAMNPDKLGSGEHCASTSNRNFEGRQGIGGRTHLVSPAMAAAAAVAGHFVDVREMMR.

Cys353, Cys414, and Cys417 together coordinate [4Fe-4S] cluster.

The protein belongs to the aconitase/IPM isomerase family. LeuC type 1 subfamily. As to quaternary structure, heterodimer of LeuC and LeuD. Requires [4Fe-4S] cluster as cofactor.

It catalyses the reaction (2R,3S)-3-isopropylmalate = (2S)-2-isopropylmalate. It functions in the pathway amino-acid biosynthesis; L-leucine biosynthesis; L-leucine from 3-methyl-2-oxobutanoate: step 2/4. Catalyzes the isomerization between 2-isopropylmalate and 3-isopropylmalate, via the formation of 2-isopropylmaleate. The protein is 3-isopropylmalate dehydratase large subunit of Xylella fastidiosa (strain M23).